The following is a 182-amino-acid chain: Small ribosomal subunit protein uS4c (182 aa).

One can recognise an S4 RNA-binding domain in the interval 82–143 (MRLDNILFRL…KERSKVLIQN (62 aa)).

Belongs to the universal ribosomal protein uS4 family. As to quaternary structure, part of the 30S ribosomal subunit. Contacts protein S5. The interaction surface between S4 and S5 is involved in control of translational fidelity.

It is found in the plastid. The protein localises to the chloroplast. One of the primary rRNA binding proteins, it binds directly to 16S rRNA where it nucleates assembly of the body of the 30S subunit. Functionally, with S5 and S12 plays an important role in translational accuracy. In Neomarica sp. (strain Lejeune 1997), this protein is Small ribosomal subunit protein uS4c (rps4).